The chain runs to 181 residues: RNA-binding protein (181 aa).

Residues 106 to 181 (FLTSVNPGES…DANTRKSKRK (76 aa)) form a disordered region. A compositionally biased stretch (basic residues) spans 141–157 (RNSKKGAKKSSSARKKK). Low complexity predominate over residues 160 to 172 (SSNSETDLSSDSD).

This sequence belongs to the phytoreovirus RNA-binding protein family.

It is found in the host cytoplasm. Constituent of viral factories. Binds to ssRNA and dsRNA. In Rice dwarf virus (isolate Akita) (RDV), this protein is RNA-binding protein.